The sequence spans 913 residues: Protein translocase subunit SecA (913 aa).

Residues Gln-87, 105 to 109 (GEGKT), and Asp-512 contribute to the ATP site. The interval 864–913 (LDQPEEEPAEVEGQPDVAVASVRTEPKIGRNEPCPCGSGKKYKHCHGQVQ) is disordered. Positions 897, 899, 908, and 909 each coordinate Zn(2+). A compositionally biased stretch (basic residues) spans 903 to 913 (KKYKHCHGQVQ).

It belongs to the SecA family. In terms of assembly, monomer and homodimer. Part of the essential Sec protein translocation apparatus which comprises SecA, SecYEG and auxiliary proteins SecDF-YajC and YidC. Zn(2+) serves as cofactor.

It is found in the cell inner membrane. Its subcellular location is the cytoplasm. It carries out the reaction ATP + H2O + cellular proteinSide 1 = ADP + phosphate + cellular proteinSide 2.. Its function is as follows. Part of the Sec protein translocase complex. Interacts with the SecYEG preprotein conducting channel. Has a central role in coupling the hydrolysis of ATP to the transfer of proteins into and across the cell membrane, serving both as a receptor for the preprotein-SecB complex and as an ATP-driven molecular motor driving the stepwise translocation of polypeptide chains across the membrane. The polypeptide is Protein translocase subunit SecA (Stutzerimonas stutzeri (strain A1501) (Pseudomonas stutzeri)).